We begin with the raw amino-acid sequence, 1339 residues long: MSGGNDGASWRLSRKPNAPNFDETQEDQWRSLREEVLQSDEDENIPESGDLTIPQLPSAKKAAKKLRKPPSGAKPTPKPKQQTLAQSMSDMDMERLLKRYRIDEDIDIAEDIDMSHLLQLHSDSDDGGDAQEATLTADEFLARLARAEAAPAASIAKEKRESGENVTVVALKDELFNVERDQSAKPPRPRPTPGAGGGAGYRNEETPKQAIELTATLAPQMDAAQFVSPAVPYKSGEMTEGLFYWFDAREQPHTLSVDPGSLFLFGKMAVEKNGRTSYLSCCVRVRNMYRSVFVLPKAGSSQEDVVKEINDICRNQGIEQRRIKFVERYYAFEVPGVPHEKTQWAKLRYPGRYPPLNAKGPFRHILIIMGASSSLLELFLIKRKLKGPSFLRISGLVASANRISHCALEFSVESPKNLRAEDTKLPVPPFTLASIQIHTQLDSKGACNEILIASVAIYKDVNIENTIRYIPDNILTGVRPASMSTPLPIDLESYCSAKGLPGVRRFANERALLDWLAQQLGKIDADMMIGHNFLGFTLDILLRRYQELSISSWSTIGRLDLKRLPRFQGTATNVNQEKETCIGRLVVDSYSLSREHYKTVNYRLLSLADQMQLQGITKGSNNFEPGTSVLTPAMLSASRDIYDVLLQVCNCAVLSTAVVSHLDVIRLTKRLTTIAGNLWSRTLFGARSERIEYLLLHTFHDLKFITPDRYVQNFKRGRDDEEEEDGKRKAKYQGGMVLDPKCGLYSDYILLLDFNSLYPSLIQEFNICFTTVDRESGSEIDVPPPENLICASCAAAGLSAPCLHKCVLPKVIKSLVDSRREVKRLMKIEKDANNLALLEIRQKALKLTANSMYGCLGFEYSRFHAQPLAELVTRQGRLALQSTVDLIPQLNPSLRVIYGDTDSVMIQTGIKNDIKAVRDLGLDLKAKINKRYQSLEIDIDGVFRAILLLKKKKYAALTVTDWQGEGKTYKKEVKGLDMVRRDWCPLSKCVCDSVLSRVLNAEGSEDILDYVMNYMRDVSEKVRAGRYTLDNFVISKSLTKEPEAYRGNSFPHATVALRMKQRKELVRVGDLIPYVICTGDRLSDKAFHVEEVRQNSQLQIDSEWYLSVQIYPPVMRLCEHIQGFSNAQLSEAMGIACHTGAKLEEEEAETMNDFSHSSLFQSRNLEECFPAALSLQVACTHCRLMTPINPHTRVMEVLADQERQRDRFDLYVCVSCRKSLPVDYVANCFTQTCYGIIRQFYQCGSAAAVKAVRTQFTYYRALFDVPHAPGCPARVKDAHYYQARRCLGVDRRLYTLAEAADPAVQEVADPVDPLNAAAETIYKRIDHLFINLDSLFAGI.

2 disordered regions span residues Met1–Asp90 and Asn177–Asn203. The segment covering Asp27–Val36 has biased composition (basic and acidic residues). Residues Pro79–Ser89 are compositionally biased toward polar residues. The Zn(2+) site is built by Cys1179, Cys1182, Cys1213, Cys1216, Cys1233, Cys1243, Cys1271, and Cys1286. A CysA-type zinc finger spans residues Cys1179–Cys1216. The short motif at Cys1243–Cys1271 is the CysB motif element.

This sequence belongs to the DNA polymerase type-B family.

It is found in the nucleus. The enzyme catalyses DNA(n) + a 2'-deoxyribonucleoside 5'-triphosphate = DNA(n+1) + diphosphate. Polymerase alpha in a complex with DNA primase is a replicative polymerase. The polypeptide is DNA polymerase alpha catalytic subunit (Leishmania donovani).